Consider the following 440-residue polypeptide: DNA polymerase delta small subunit (440 aa).

Belongs to the DNA polymerase delta/II small subunit family. In terms of assembly, heterodimer with subunits of 125 kDa and 50 kDa.

It localises to the nucleus. The enzyme catalyses DNA(n) + a 2'-deoxyribonucleoside 5'-triphosphate = DNA(n+1) + diphosphate. In terms of biological role, the function of the small subunit is not yet clear. In Arabidopsis thaliana (Mouse-ear cress), this protein is DNA polymerase delta small subunit (POLD2).